A 175-amino-acid chain; its full sequence is Ferritin light chain (175 aa).

The residue at position 2 (Ser2) is an N-acetylserine. Residues 7 to 156 enclose the Ferritin-like diiron domain; it reads QNYSTEVEAA…DHLTNIQRLV (150 aa). Residues Glu54, Glu57, Glu58, Glu61, and Glu64 each coordinate Fe cation. A catalytic site for iron oxidation region spans residues 54 to 61; that stretch reads ELAEEKRE.

This sequence belongs to the ferritin family. In terms of assembly, oligomer of 24 subunits. There are two types of subunits: L (light) chain and H (heavy) chain. The major chain can be light or heavy, depending on the species and tissue type. The functional molecule forms a roughly spherical shell with a diameter of 12 nm and contains a central cavity into which the insoluble mineral iron core is deposited. Interacts with NCOA4.

It localises to the cytoplasmic vesicle. Its subcellular location is the autophagosome. The protein resides in the cytoplasm. The protein localises to the autolysosome. Its function is as follows. Stores iron in a soluble, non-toxic, readily available form. Important for iron homeostasis. Iron is taken up in the ferrous form and deposited as ferric hydroxides after oxidation. Also plays a role in delivery of iron to cells. Mediates iron uptake in capsule cells of the developing kidney. Delivery to lysosomes by the cargo receptor NCOA4 for autophagic degradation and release or iron. This is Ferritin light chain (FTL) from Equus caballus (Horse).